A 1212-amino-acid polypeptide reads, in one-letter code: DNA-directed RNA polymerase subunit beta'' (1212 aa).

Zn(2+)-binding residues include Cys-229, Cys-302, Cys-309, and Cys-312. Positions 1162–1212 are disordered; that stretch reads QKETSKNKKETSKNKKETSKNKKETSKNKKETSKNKKETSKNKKEASKNKK.

Belongs to the RNA polymerase beta' chain family. RpoC2 subfamily. In terms of assembly, in plastids the minimal PEP RNA polymerase catalytic core is composed of four subunits: alpha, beta, beta', and beta''. When a (nuclear-encoded) sigma factor is associated with the core the holoenzyme is formed, which can initiate transcription. It depends on Zn(2+) as a cofactor.

The protein resides in the plastid. The protein localises to the chloroplast. The catalysed reaction is RNA(n) + a ribonucleoside 5'-triphosphate = RNA(n+1) + diphosphate. DNA-dependent RNA polymerase catalyzes the transcription of DNA into RNA using the four ribonucleoside triphosphates as substrates. The sequence is that of DNA-directed RNA polymerase subunit beta'' from Cryptomeria japonica (Japanese cedar).